Consider the following 193-residue polypeptide: ATP-dependent Clp protease proteolytic subunit (193 aa).

S98 (nucleophile) is an active-site residue. H123 is a catalytic residue.

The protein belongs to the peptidase S14 family. In terms of assembly, fourteen ClpP subunits assemble into 2 heptameric rings which stack back to back to give a disk-like structure with a central cavity, resembling the structure of eukaryotic proteasomes.

It is found in the cytoplasm. It catalyses the reaction Hydrolysis of proteins to small peptides in the presence of ATP and magnesium. alpha-casein is the usual test substrate. In the absence of ATP, only oligopeptides shorter than five residues are hydrolyzed (such as succinyl-Leu-Tyr-|-NHMec, and Leu-Tyr-Leu-|-Tyr-Trp, in which cleavage of the -Tyr-|-Leu- and -Tyr-|-Trp bonds also occurs).. Cleaves peptides in various proteins in a process that requires ATP hydrolysis. Has a chymotrypsin-like activity. Plays a major role in the degradation of misfolded proteins. This is ATP-dependent Clp protease proteolytic subunit from Clostridium acetobutylicum (strain ATCC 824 / DSM 792 / JCM 1419 / IAM 19013 / LMG 5710 / NBRC 13948 / NRRL B-527 / VKM B-1787 / 2291 / W).